A 112-amino-acid chain; its full sequence is Urocortin-2 (112 aa).

An N-terminal signal peptide occupies residues 1–22 (MTRCALLLLMVLMLGRVLVVPV). The propeptide occupies 23–70 (TPIPTFQLRPQNSPQTTPRPAASESPSAAPTWPWAAQSHCSPTRHPGS). Residues 27-66 (TFQLRPQNSPQTTPRPAASESPSAAPTWPWAAQSHCSPTR) are disordered. Over residues 38-58 (TTPRPAASESPSAAPTWPWAA) the composition is skewed to low complexity.

It belongs to the sauvagine/corticotropin-releasing factor/urotensin I family. Binds with high affinity to CRF receptors 2-alpha and 2-beta. In terms of processing, glycosylated.

Its subcellular location is the secreted. Suppresses food intake, delays gastric emptying and decreases heat-induced edema. Might represent an endogenous ligand for maintaining homeostasis after stress. The protein is Urocortin-2 (UCN2) of Homo sapiens (Human).